Here is a 195-residue protein sequence, read N- to C-terminus: Probable GTP-binding protein EngB (195 aa).

The EngB-type G domain maps to 22–195; the sequence is QLPEIALAGR…WSALSRYIKR (174 aa). Residues 30–37, 57–61, 75–78, 142–145, and 174–176 each bind GTP; these read GRSNVGKS, GKTQT, DVPG, TKLD, and FSA. Mg(2+) is bound by residues S37 and T59.

The protein belongs to the TRAFAC class TrmE-Era-EngA-EngB-Septin-like GTPase superfamily. EngB GTPase family. Mg(2+) serves as cofactor.

Its function is as follows. Necessary for normal cell division and for the maintenance of normal septation. This chain is Probable GTP-binding protein EngB, found in Oceanobacillus iheyensis (strain DSM 14371 / CIP 107618 / JCM 11309 / KCTC 3954 / HTE831).